Here is a 257-residue protein sequence, read N- to C-terminus: Phosphonates import ATP-binding protein PhnC (257 aa).

In terms of domain architecture, ABC transporter spans 4 to 248; the sequence is IEFKDVRKVY…AFNEIYGRSI (245 aa). 37–44 contacts ATP; that stretch reads GLSGSGKS.

It belongs to the ABC transporter superfamily. Phosphonates importer (TC 3.A.1.9.1) family. The complex is composed of two ATP-binding proteins (PhnC), two transmembrane proteins (PhnE) and a solute-binding protein (PhnD).

Its subcellular location is the cell membrane. The catalysed reaction is phosphonate(out) + ATP + H2O = phosphonate(in) + ADP + phosphate + H(+). In terms of biological role, part of the ABC transporter complex PhnCDE involved in phosphonates import. Responsible for energy coupling to the transport system. This Staphylococcus saprophyticus subsp. saprophyticus (strain ATCC 15305 / DSM 20229 / NCIMB 8711 / NCTC 7292 / S-41) protein is Phosphonates import ATP-binding protein PhnC.